The chain runs to 499 residues: Lysine--tRNA ligase (499 aa).

Mg(2+) contacts are provided by E409 and E416.

It belongs to the class-II aminoacyl-tRNA synthetase family. Homodimer. Requires Mg(2+) as cofactor.

The protein localises to the cytoplasm. The enzyme catalyses tRNA(Lys) + L-lysine + ATP = L-lysyl-tRNA(Lys) + AMP + diphosphate. The sequence is that of Lysine--tRNA ligase from Pseudomonas fluorescens (strain Pf0-1).